Reading from the N-terminus, the 570-residue chain is Molecular chaperone MKKS (570 aa).

192-199 (GHIILGKS) contributes to the ATP binding site. The substrate-binding apical domain stretch occupies residues 198–370 (KSLIVPLKGQ…FHLIPNEATI (173 aa)).

It belongs to the TCP-1 chaperonin family. Component of a complex composed at least of MKKS, BBS10, BBS12, TCP1, CCT2, CCT3, CCT4, CCT5 and CCT8. Interacts with STUB1. Interacts with BBS2 (via coiled coil domain). Interacts with CCDC28B. Interacts with BBS12. Interacts with SMARCC1, a component of the SWI/SNF complexes; the interaction takes place predominantly in the cytoplasm and may modulate SMARCC1 location. Interacts with DLEC1. As to expression, widely expressed in adult and fetal tissues.

It is found in the cytoplasm. Its subcellular location is the cytoskeleton. It localises to the microtubule organizing center. The protein resides in the centrosome. The protein localises to the cytosol. It is found in the nucleus. Functionally, probable molecular chaperone that assists the folding of proteins upon ATP hydrolysis. Plays a role in the assembly of BBSome, a complex involved in ciliogenesis regulating transports vesicles to the cilia. May play a role in protein processing in limb, cardiac and reproductive system development. May play a role in cytokinesis. The sequence is that of Molecular chaperone MKKS from Homo sapiens (Human).